We begin with the raw amino-acid sequence, 478 residues long: Serine/threonine-protein phosphatase 2A activator 1 (478 aa).

The interval 359-478 (DPSAIPPPSR…DITTKAPWAK (120 aa)) is disordered. Over residues 396-419 (APWATASQSTPPPSTGTAAPWATS) the composition is skewed to low complexity.

It belongs to the PTPA-type PPIase family.

It is found in the cytoplasm. The protein localises to the nucleus. It carries out the reaction [protein]-peptidylproline (omega=180) = [protein]-peptidylproline (omega=0). In terms of biological role, PPIases accelerate the folding of proteins. It catalyzes the cis-trans isomerization of proline imidic peptide bonds in oligopeptides. Acts as a regulatory subunit for PP2A-like phosphatases modulating their activity or substrate specificity, probably by inducing a conformational change in the catalytic subunit, a direct target of the PPIase. Can reactivate inactive phosphatase PP2A-phosphatase methylesterase complexes (PP2Ai) in presence of ATP and Mg(2+) by dissociating the inactive form from the complex. The chain is Serine/threonine-protein phosphatase 2A activator 1 (rrd1) from Aspergillus oryzae (strain ATCC 42149 / RIB 40) (Yellow koji mold).